A 273-amino-acid chain; its full sequence is Bis(5'-nucleosyl)-tetraphosphatase, symmetrical (273 aa).

The protein belongs to the Ap4A hydrolase family.

It carries out the reaction P(1),P(4)-bis(5'-adenosyl) tetraphosphate + H2O = 2 ADP + 2 H(+). In terms of biological role, hydrolyzes diadenosine 5',5'''-P1,P4-tetraphosphate to yield ADP. This chain is Bis(5'-nucleosyl)-tetraphosphatase, symmetrical, found in Histophilus somni (strain 129Pt) (Haemophilus somnus).